We begin with the raw amino-acid sequence, 656 residues long: Solute carrier family 5 member 4A (656 aa).

Residues 1–28 (MASTASVSTSTASSELSSLSNNINNAAD) lie on the Cytoplasmic side of the membrane. The helical transmembrane segment at 29–47 (ISVIVIYFVVVMAVGVWAM) threads the bilayer. The Extracellular segment spans residues 48 to 64 (LKTNRSTVGGFFLAGRS). Residues 65 to 85 (MTWWPMGASLFASNIGSGHFV) traverse the membrane as a helical segment. Residues 86–105 (GLAGTGAASGIAVTAFESHS) are Cytoplasmic-facing. A helical membrane pass occupies residues 106–126 (FALLLVLGWIFVPIYIKAGVM). Topologically, residues 127–171 (TMPEYLKKRFGGKRLQIYLSILFLFICVILTISADIFSGAIFIKL) are extracellular. A helical membrane pass occupies residues 172–191 (ALGLNLYLAILILLAITAIF). Residues 192–208 (TITGGLASVIYTDTVQA) are Cytoplasmic-facing. Residues 209-229 (VIMLVGSFILMVFAFVEVGGY) form a helical membrane-spanning segment. Over 230-270 (ESFTEKFMNAIPSVVEGDNLTINSRCYTPQPDSFHIFRDPV) the chain is Extracellular. Asn-248 is a glycosylation site (N-linked (GlcNAc...) asparagine). Residues 271 to 291 (TGDIPWPGTAFGMPITALWYW) form a helical membrane-spanning segment. The Cytoplasmic segment spans residues 292 to 314 (CINQVIVQRCLCGKNLSHVKAAC). Residues 315–334 (ILCGYLKLLPLFFMVMPGMI) traverse the membrane as a helical segment. At 335–423 (SRILYTDMVA…RKKASERELL (89 aa)) the chain is on the extracellular side. A helical membrane pass occupies residues 424–443 (IAGRLFVSVLIVTSILWVPI). The Cytoplasmic portion of the chain corresponds to 444-455 (VEVSQGGQLVHY). The helical transmembrane segment at 456 to 476 (TEAISSYLGPPIAAVFLVAVF) threads the bilayer. Topologically, residues 477–526 (CKRANEQGAFWGLMVGLVMGLIRMIAEFSYGTGSCLAPSSCPKIICGVHY) are extracellular. Residues 527-547 (LYFAIILFFVCILVILGVSYL) traverse the membrane as a helical segment. Topologically, residues 548-634 (TKPIPDVHLH…TDTTEKPFWR (87 aa)) are cytoplasmic. The disordered stretch occupies residues 574 to 593 (DAEDKEENGADDRTEEDQTE). A helical membrane pass occupies residues 635 to 655 (TVMNVNVILLLAVAAFFYGYF).

It belongs to the sodium:solute symporter (SSF) (TC 2.A.21) family. Expressed in small intestine. Expressed in kidney.

Its subcellular location is the cell membrane. With respect to regulation, not inhibited by phlorizin. In terms of biological role, does not function as sodium/D-glucose symporter. Generates D-glucose-induced depolarization in a pH-dependent manner, with activity in acidic conditions (pH 5) but not neutral conditions. In Mus musculus (Mouse), this protein is Solute carrier family 5 member 4A.